A 233-amino-acid chain; its full sequence is ATP-dependent Clp protease proteolytic subunit 2 (233 aa).

Ser116 acts as the Nucleophile in catalysis. The active site involves His141. The segment at 214-233 is disordered; sequence EGLKSIQPNGEAADDSEDDA.

This sequence belongs to the peptidase S14 family. As to quaternary structure, fourteen ClpP subunits assemble into 2 heptameric rings which stack back to back to give a disk-like structure with a central cavity, resembling the structure of eukaryotic proteasomes.

Its subcellular location is the cytoplasm. The enzyme catalyses Hydrolysis of proteins to small peptides in the presence of ATP and magnesium. alpha-casein is the usual test substrate. In the absence of ATP, only oligopeptides shorter than five residues are hydrolyzed (such as succinyl-Leu-Tyr-|-NHMec, and Leu-Tyr-Leu-|-Tyr-Trp, in which cleavage of the -Tyr-|-Leu- and -Tyr-|-Trp bonds also occurs).. Functionally, cleaves peptides in various proteins in a process that requires ATP hydrolysis. Has a chymotrypsin-like activity. Plays a major role in the degradation of misfolded proteins. This is ATP-dependent Clp protease proteolytic subunit 2 from Salinibacter ruber (strain DSM 13855 / M31).